The following is a 765-amino-acid chain: uncharacterized protein (765 aa).

Positions 1–22 (MKLKGFLAVGVSVFGFSGLLMA) are cleaved as a signal peptide. The N-palmitoyl cysteine moiety is linked to residue C23. C23 is lipidated: S-diacylglycerol cysteine. 2 disordered regions span residues 177–203 (EGTPTSTTVQATVSSRSAEKKGTLEIA) and 218–255 (TAQNNSNETTKEQKQVKRSSSSSSTTSTTGETKDTTKS). The segment covering 179 to 192 (TPTSTTVQATVSSR) has biased composition (polar residues). Residues 236 to 247 (SSSSSSTTSTTG) show a composition bias toward low complexity.

Belongs to the MG185/MG260 family.

Its subcellular location is the cell membrane. This is an uncharacterized protein from Mycoplasma genitalium (strain ATCC 33530 / DSM 19775 / NCTC 10195 / G37) (Mycoplasmoides genitalium).